A 613-amino-acid chain; its full sequence is Thymidine kinase (613 aa).

Disordered stretches follow at residues 1–233 (MAEG…GVKS) and 253–276 (SDGE…ATPR). Residues 8 to 18 (FSSSSTSSEEA) show a composition bias toward low complexity. A compositionally biased stretch (basic and acidic residues) spans 78-88 (PKNEPRPERGK). A compositionally biased stretch (basic residues) spans 114 to 126 (LGSRTRSKSRSRD). Residues 199 to 218 (HRYDKPSYDEEVCQKKDKGG) show a composition bias toward basic and acidic residues. 301–308 (GSMGVGKT) is a binding site for ATP. Glu-327 acts as the Proton acceptor in catalysis. Substrate is bound by residues Tyr-344, Gln-365, and Arg-461.

This sequence belongs to the herpesviridae thymidine kinase family. In terms of assembly, homodimer.

The catalysed reaction is thymidine + ATP = dTMP + ADP + H(+). Functionally, catalyzes the transfer of the gamma-phospho group of ATP to thymidine to generate dTMP in the salvage pathway of pyrimidine synthesis. The dTMP serves as a substrate for DNA polymerase during viral DNA replication. Allows the virus to be reactivated and to grow in non-proliferative cells lacking a high concentration of phosphorylated nucleic acid precursors. The chain is Thymidine kinase from Equine herpesvirus 2 (strain 86/87) (EHV-2).